The chain runs to 75 residues: Small ribosomal subunit protein bS18c (75 aa).

Belongs to the bacterial ribosomal protein bS18 family. As to quaternary structure, part of the 30S ribosomal subunit.

Its subcellular location is the plastid. It is found in the chloroplast. In Psilotum nudum (Whisk fern), this protein is Small ribosomal subunit protein bS18c.